We begin with the raw amino-acid sequence, 383 residues long: Chaperone protein DnaJ (383 aa).

One can recognise a J domain in the interval 5 to 70; sequence DYYELLGVEK…QKRAAYDRFG (66 aa). The CR-type zinc-finger motif lies at 137 to 215; the sequence is GKTATVKVPS…CGGSGRTRKE (79 aa). Residues Cys-150, Cys-153, Cys-167, Cys-170, Cys-189, Cys-192, Cys-203, and Cys-206 each coordinate Zn(2+). CXXCXGXG motif repeat units lie at residues 150–157, 167–174, 189–196, and 203–210; these read CEDCKGTG, CSACHGHG, CPTCQGMG, and CRSCGGSG.

This sequence belongs to the DnaJ family. Homodimer. It depends on Zn(2+) as a cofactor.

The protein resides in the cytoplasm. In terms of biological role, participates actively in the response to hyperosmotic and heat shock by preventing the aggregation of stress-denatured proteins and by disaggregating proteins, also in an autonomous, DnaK-independent fashion. Unfolded proteins bind initially to DnaJ; upon interaction with the DnaJ-bound protein, DnaK hydrolyzes its bound ATP, resulting in the formation of a stable complex. GrpE releases ADP from DnaK; ATP binding to DnaK triggers the release of the substrate protein, thus completing the reaction cycle. Several rounds of ATP-dependent interactions between DnaJ, DnaK and GrpE are required for fully efficient folding. Also involved, together with DnaK and GrpE, in the DNA replication of plasmids through activation of initiation proteins. The sequence is that of Chaperone protein DnaJ from Paramagnetospirillum magneticum (strain ATCC 700264 / AMB-1) (Magnetospirillum magneticum).